The following is a 126-amino-acid chain: C-type natriuretic peptide 2 (126 aa).

An N-terminal signal peptide occupies residues 1–22; sequence MAVCSSSSLILLTVFLSVAVET. Residues 23–102 constitute a propeptide that is removed on maturation; sequence RPSSDRDEEQ…REKTRRWGRK (80 aa). The interval 44–80 is disordered; that stretch reads SLILAPPTSNDSTEGSSGSPEPPTPSEAPVLIHGDRG. A disulfide bridge connects residues C110 and C126.

The protein belongs to the natriuretic peptide family. As to expression, brain and spinal cord.

The protein localises to the secreted. Exhibits natriuretic and vasodepressant activity. Has cGMP-stimulating activity. May help to regulate body fluid homeostasis in a variety of aquatic environments. In Oryzias latipes (Japanese rice fish), this protein is C-type natriuretic peptide 2.